The chain runs to 248 residues: 3-deoxy-manno-octulosonate cytidylyltransferase (248 aa).

It belongs to the KdsB family.

It is found in the cytoplasm. The catalysed reaction is 3-deoxy-alpha-D-manno-oct-2-ulosonate + CTP = CMP-3-deoxy-beta-D-manno-octulosonate + diphosphate. The protein operates within nucleotide-sugar biosynthesis; CMP-3-deoxy-D-manno-octulosonate biosynthesis; CMP-3-deoxy-D-manno-octulosonate from 3-deoxy-D-manno-octulosonate and CTP: step 1/1. It functions in the pathway bacterial outer membrane biogenesis; lipopolysaccharide biosynthesis. Activates KDO (a required 8-carbon sugar) for incorporation into bacterial lipopolysaccharide in Gram-negative bacteria. The protein is 3-deoxy-manno-octulosonate cytidylyltransferase of Leptospira interrogans serogroup Icterohaemorrhagiae serovar copenhageni (strain Fiocruz L1-130).